Here is a 96-residue protein sequence, read N- to C-terminus: MSETITPDVHEVNPAARRTAVGARRPFYRRRKSCPFSGPNAPKIDYKDVRLLSRFLSERGKIVPSRITAVSAKKQRELAQAIKRARFLALLPYVVN.

The protein belongs to the bacterial ribosomal protein bS18 family. As to quaternary structure, part of the 30S ribosomal subunit. Forms a tight heterodimer with protein bS6.

Its function is as follows. Binds as a heterodimer with protein bS6 to the central domain of the 16S rRNA, where it helps stabilize the platform of the 30S subunit. This chain is Small ribosomal subunit protein bS18, found in Gluconobacter oxydans (strain 621H) (Gluconobacter suboxydans).